Here is a 369-residue protein sequence, read N- to C-terminus: Allantoicase (369 aa).

A disordered region spans residues 341 to 369 (PDSKNNNNNNNNNNNNNTSNSFKTSDRQQ). The segment covering 345 to 357 (NNNNNNNNNNNNN) has biased composition (low complexity).

Belongs to the allantoicase family.

It carries out the reaction allantoate + H2O = (S)-ureidoglycolate + urea. Its pathway is nitrogen metabolism; (S)-allantoin degradation; (S)-ureidoglycolate from allantoate (aminidohydrolase route): step 1/1. Its function is as follows. Utilization of purines as secondary nitrogen sources, when primary sources are limiting. This chain is Allantoicase (allC), found in Dictyostelium discoideum (Social amoeba).